Consider the following 894-residue polypeptide: Bifunctional glutamine synthetase adenylyltransferase/adenylyl-removing enzyme (894 aa).

The adenylyl removase stretch occupies residues 1–410 (MPANTSAAIA…HFEQVFILPS (410 aa)). The segment at 415 to 894 (SHPLSELWLD…QVFEQALDFS (480 aa)) is adenylyl transferase.

The protein belongs to the GlnE family. It depends on Mg(2+) as a cofactor.

It carries out the reaction [glutamine synthetase]-O(4)-(5'-adenylyl)-L-tyrosine + phosphate = [glutamine synthetase]-L-tyrosine + ADP. The catalysed reaction is [glutamine synthetase]-L-tyrosine + ATP = [glutamine synthetase]-O(4)-(5'-adenylyl)-L-tyrosine + diphosphate. Its function is as follows. Involved in the regulation of glutamine synthetase GlnA, a key enzyme in the process to assimilate ammonia. When cellular nitrogen levels are high, the C-terminal adenylyl transferase (AT) inactivates GlnA by covalent transfer of an adenylyl group from ATP to specific tyrosine residue of GlnA, thus reducing its activity. Conversely, when nitrogen levels are low, the N-terminal adenylyl removase (AR) activates GlnA by removing the adenylyl group by phosphorolysis, increasing its activity. The regulatory region of GlnE binds the signal transduction protein PII (GlnB) which indicates the nitrogen status of the cell. The protein is Bifunctional glutamine synthetase adenylyltransferase/adenylyl-removing enzyme of Chromobacterium violaceum (strain ATCC 12472 / DSM 30191 / JCM 1249 / CCUG 213 / NBRC 12614 / NCIMB 9131 / NCTC 9757 / MK).